The primary structure comprises 147 residues: Fibromodulin (147 aa).

LRR repeat units lie at residues 1-15 (LDHNNLTRMPGPLPR), 16-37 (SLRELHLDHNQISRVPNNALEG), 40-61 (NLTALYLQHNEIQEVGSSMRGL), 63-84 (SLILLDLSYNHLRRVPDGLPSA), 85-105 (LEQLYLEHNNVYTVPDSYFRG), and 108-128 (KLLYVRLSHNSLTNSGLASNT). Asn-5 carries N-linked (GlcNAc...) asparagine glycosylation. N-linked (GlcNAc...) asparagine glycosylation is present at Asn-40. The N-linked (GlcNAc...) asparagine glycan is linked to Asn-130. An LRR 7 repeat occupies 133–147 (SLLELDLSYNQLQKI).

Belongs to the small leucine-rich proteoglycan (SLRP) family. SLRP class II subfamily. As to quaternary structure, binds to type I and type II collagen. In terms of processing, binds keratan sulfate chains. Sulfated on tyrosine residues. Post-translationally, the N-terminus is blocked by a pyrrolidone carboxylic acid generated by post-translational modification of N-terminal glutamine.

The protein localises to the secreted. It localises to the extracellular space. Its subcellular location is the extracellular matrix. Affects the rate of fibrils formation. May have a primary role in collagen fibrillogenesis. The polypeptide is Fibromodulin (FMOD) (Oryctolagus cuniculus (Rabbit)).